Reading from the N-terminus, the 814-residue chain is Glycosyltransferase GlyD (814 aa).

The interval 1–264 (MNKTIVLAGD…SQILQHHMGE (264 aa)) is GT8 domain. Residues 8–13 (AGDRNY) and 102–103 (DS) each bind UDP. Mn(2+) is bound by residues Asp102, Asp104, and His226. Residue 226–232 (HFTTYRK) participates in UDP binding. Residues 542–814 (EKPLDIIQVK…NSQIVARILN (273 aa)) are GT-D domain.

The protein in the N-terminal section; belongs to the glycosyltransferase 8 family. This sequence in the C-terminal section; belongs to the GT-D family.

The protein operates within protein modification; protein glycosylation. Its function is as follows. Involved in the polymorphic O-glycosylation of the serine-rich repeat protein PsrP. Catalyzes the third step in glycosylation PsrP in this bacteria. Transfers glucose from UDP-glucose to the terminal glucose moiety of already-glycosylated PsrP (using truncated substrates with PsrP SSR1-GlcNAc-Glc); the C-terminal GT-D domain is sufficient for this reaction in vitro. Also transfers galactose from UDP-galactose to the terminal glucose moiety of already-glycosylated PsrP; the C-terminal GT-D domain is also sufficient for this reaction in vitro. Activity is much higher with UDP-glucose, and the enzyme has a very marked preference for PsrP substrate that has already been modified by GlcNAc and glucose. In vitro has hydrolytic activity against UDP-galactose and to a lesser extent against UDP-glucose. Also catalyzes the fourth step in glycosylation of PsrP in this bacteria. Can transfer the sugar from both UDP-glucose and UDP-galactose to the terminal sugar moiety of PsrP-GlcNAc-Glc-Glc and PsrP-GlcNAc-Glc-Gal; the C-terminal GT-D domain is also sufficient for this reaction in vitro (using truncated substrates with glycosylated PsrP SSR1). The N-terminal GT-D domain can transfer galactose from UDP-galactose to PsrP-GlcNAc-Glc-Gal or PsrP-GlcNAc-Glc-Glc in the fourth step. This chain is Glycosyltransferase GlyD, found in Streptococcus pneumoniae serotype 4 (strain ATCC BAA-334 / TIGR4).